The chain runs to 1075 residues: mRNA-binding protein PUF2 (1075 aa).

The disordered stretch occupies residues 38–68 (NTNARSVRVSDKRGRSSSTSPQKIGSYRTRA). Ser-72 is modified (phosphoserine). Residues 93-105 (TPVVVVPPTSSTP) show a composition bias toward low complexity. Residues 93–112 (TPVVVVPPTSSTPDSLNSTT) form a disordered region. At Ser-198 the chain carries Phosphoserine. The region spanning 316-402 (NTISISNVFP…APSTVSFARV (87 aa)) is the RRM domain. The 362-residue stretch at 511 to 872 (ELNHLLQNAL…QLLEEVGLSS (362 aa)) folds into the PUM-HD domain. Pumilio repeat units follow at residues 574–611 (AIVM…IMLR), 612–647 (KCNK…NLVT), 649–683 (GVSD…FIFE), 684–719 (SVLS…QLLT), 722–758 (SLII…LILC), and 760–800 (KLVN…KIIH). Residues Ser-872 and Ser-876 each carry the phosphoserine modification. Disordered regions lie at residues 874–931 (GISP…LNFN) and 997–1075 (NNYN…SYGY). 3 stretches are compositionally biased toward low complexity: residues 901 to 916 (VSVS…HNSV), 997 to 1009 (NNYN…SQMN), and 1018 to 1063 (NNNN…NNNN).

The protein resides in the cytoplasm. In terms of biological role, RNA-binding protein involved in post-transcriptional regulation. Negatively regulates expression of COX17 by binding to the 3'-UTR of COX17 mRNA. Promotes decay of COX17 mRNA by enhancing its rate of deadenylation and subsequent turnover. Predominantly binds to mRNAs encoding membrane-associated proteins with roles in transmembrane transport and vesicular trafficking. In Saccharomyces cerevisiae (strain ATCC 204508 / S288c) (Baker's yeast), this protein is mRNA-binding protein PUF2 (PUF2).